We begin with the raw amino-acid sequence, 94 residues long: Cell division protein FtsB (94 aa).

Residues 1-3 are Cytoplasmic-facing; the sequence is MRA. A helical transmembrane segment spans residues 4 to 21; it reads FAVLLIIALGWLQYTLWF. Residues 22–94 lie on the Periplasmic side of the membrane; that stretch reads GKNGMEDYAQ…YRIIDENSEE (73 aa). Positions 40-60 form a coiled coil; the sequence is EEVNQGLRNRNGQMFAEIDDL.

The protein belongs to the FtsB family. Part of a complex composed of FtsB, FtsL and FtsQ.

The protein resides in the cell inner membrane. Essential cell division protein. May link together the upstream cell division proteins, which are predominantly cytoplasmic, with the downstream cell division proteins, which are predominantly periplasmic. This Aliivibrio salmonicida (strain LFI1238) (Vibrio salmonicida (strain LFI1238)) protein is Cell division protein FtsB.